The chain runs to 322 residues: Probable L-asparaginase (322 aa).

One can recognise an Asparaginase/glutaminase domain in the interval 6–320 (PRLALIHTGG…EDIRRVFTQG (315 aa)). Residues 13-37 (TGGTIASRPSPDGRGLTPQTPPALP) form a disordered region. Residue T16 is the O-isoaspartyl threonine intermediate of the active site. Residues S54 and 85 to 86 (TD) each bind substrate.

The protein belongs to the asparaginase 1 family.

The protein resides in the cytoplasm. It catalyses the reaction L-asparagine + H2O = L-aspartate + NH4(+). This Deinococcus radiodurans (strain ATCC 13939 / DSM 20539 / JCM 16871 / CCUG 27074 / LMG 4051 / NBRC 15346 / NCIMB 9279 / VKM B-1422 / R1) protein is Probable L-asparaginase (ansA).